The following is a 313-amino-acid chain: Olfactory receptor 5H15 (313 aa).

At 1–28 (MEEENATLLTEFVLTGFLYQPQWKIPLF) the chain is on the extracellular side. The N-linked (GlcNAc...) asparagine glycan is linked to asparagine 5. The helical transmembrane segment at 29-49 (LAFLVIYLITIMGNLGLIAVI) threads the bilayer. The Cytoplasmic segment spans residues 50–56 (WKDPHLH). Residues 57–77 (IPMYLLLGNLAFVDAWISSTV) traverse the membrane as a helical segment. Residues 78 to 98 (TPKMLNNFLAKSKMISLSECK) are Extracellular-facing. A disulfide bridge connects residues cysteine 97 and cysteine 179. A helical membrane pass occupies residues 99 to 119 (IQFFSIAIGVTTECFLLATMA). At 120-143 (YDRYVAICKPLLYPAIMTNGLCIR) the chain is on the cytoplasmic side. Residues 144-164 (LLILSYIAGILHALIHEGFLF) form a helical membrane-spanning segment. Residues 165–195 (RLTFCNSNIVHHIYCDTIPLSKISCTDSSIN) lie on the Extracellular side of the membrane. Residues 196–216 (FLMVFIFSGSIQVFSIVTILI) traverse the membrane as a helical segment. Topologically, residues 217–240 (SYTFVLFTVLEKKSDKGVRKAFST) are cytoplasmic. The helical transmembrane segment at 241–261 (CGAHLFSVCLYYGPLLLMYVG) threads the bilayer. The Extracellular segment spans residues 262–271 (PASPQADGQN). The helical transmembrane segment at 272 to 292 (MVEPLFYTVIIPLLNPIIYSL) threads the bilayer. Topologically, residues 293-313 (RNKQVIVSFIKMLKRNVKVSY) are cytoplasmic.

The protein belongs to the G-protein coupled receptor 1 family.

The protein localises to the cell membrane. Its function is as follows. Odorant receptor. In Homo sapiens (Human), this protein is Olfactory receptor 5H15 (OR5H15).